We begin with the raw amino-acid sequence, 271 residues long: D-methionine-binding lipoprotein MetQ (271 aa).

The first 22 residues, 1 to 22 (MAFKFKTFAAVGALIGSLALVG), serve as a signal peptide directing secretion. C23 carries the N-palmitoyl cysteine lipid modification. A lipid anchor (S-diacylglycerol cysteine) is attached at C23.

This sequence belongs to the NlpA lipoprotein family.

It is found in the cell membrane. In terms of biological role, this protein is a component of a D-methionine permease, a binding protein-dependent, ATP-driven transport system. This Escherichia coli (strain K12) protein is D-methionine-binding lipoprotein MetQ (metQ).